The chain runs to 514 residues: Bifunctional purine biosynthesis protein PurH (514 aa).

Residues 1–143 (MTRRALISVS…KNHAGVLVLV (143 aa)) enclose the MGS-like domain.

This sequence belongs to the PurH family.

It carries out the reaction (6R)-10-formyltetrahydrofolate + 5-amino-1-(5-phospho-beta-D-ribosyl)imidazole-4-carboxamide = 5-formamido-1-(5-phospho-D-ribosyl)imidazole-4-carboxamide + (6S)-5,6,7,8-tetrahydrofolate. The enzyme catalyses IMP + H2O = 5-formamido-1-(5-phospho-D-ribosyl)imidazole-4-carboxamide. The protein operates within purine metabolism; IMP biosynthesis via de novo pathway; 5-formamido-1-(5-phospho-D-ribosyl)imidazole-4-carboxamide from 5-amino-1-(5-phospho-D-ribosyl)imidazole-4-carboxamide (10-formyl THF route): step 1/1. It functions in the pathway purine metabolism; IMP biosynthesis via de novo pathway; IMP from 5-formamido-1-(5-phospho-D-ribosyl)imidazole-4-carboxamide: step 1/1. In Deinococcus geothermalis (strain DSM 11300 / CIP 105573 / AG-3a), this protein is Bifunctional purine biosynthesis protein PurH.